The primary structure comprises 404 residues: Cytoplasmic tRNA 2-thiolation protein 2 (404 aa).

It belongs to the CTU2/NCS2 family.

The protein localises to the cytoplasm. The protein operates within tRNA modification; 5-methoxycarbonylmethyl-2-thiouridine-tRNA biosynthesis. Its function is as follows. Plays a central role in 2-thiolation of mcm(5)S(2)U at tRNA wobble positions of tRNA(Lys), tRNA(Glu) and tRNA(Gln). May act by forming a heterodimer with NCS6/CTU1 that ligates sulfur from thiocarboxylated URM1 onto the uridine of tRNAs at wobble position. This Drosophila mojavensis (Fruit fly) protein is Cytoplasmic tRNA 2-thiolation protein 2.